We begin with the raw amino-acid sequence, 192 residues long: Fe/S biogenesis protein NfuA (192 aa).

The [4Fe-4S] cluster site is built by Cys149 and Cys152.

It belongs to the NfuA family. As to quaternary structure, homodimer. It depends on [4Fe-4S] cluster as a cofactor.

Functionally, involved in iron-sulfur cluster biogenesis. Binds a 4Fe-4S cluster, can transfer this cluster to apoproteins, and thereby intervenes in the maturation of Fe/S proteins. Could also act as a scaffold/chaperone for damaged Fe/S proteins. The chain is Fe/S biogenesis protein NfuA from Shewanella putrefaciens (strain CN-32 / ATCC BAA-453).